We begin with the raw amino-acid sequence, 484 residues long: L-amino-acid oxidase (484 aa).

A disulfide bridge links C8 with C171. Residues 41-42 (MS), 61-62 (EA), and R69 contribute to the FAD site. Position 73 (H73) interacts with Zn(2+). 85–88 (GPMR) contributes to the FAD binding site. Substrate is bound at residue R88. An N-linked (GlcNAc...) asparagine glycan is attached at N170. H221 provides a ligand contact to substrate. V259 serves as a coordination point for FAD. A Zn(2+)-binding site is contributed by E277. The cysteines at positions 329 and 410 are disulfide-linked. Y370 contacts substrate. FAD-binding positions include E455 and 462 to 467 (GWIDST). Residue 462 to 463 (GW) participates in substrate binding.

It belongs to the flavin monoamine oxidase family. FIG1 subfamily. Homodimer; non-covalently linked. FAD serves as cofactor. In terms of tissue distribution, expressed by the venom gland.

The protein localises to the secreted. It catalyses the reaction an L-alpha-amino acid + O2 + H2O = a 2-oxocarboxylate + H2O2 + NH4(+). In terms of biological role, catalyzes an oxidative deamination of predominantly hydrophobic and aromatic L-amino acids, thus producing hydrogen peroxide that may contribute to the diverse toxic effects of this enzyme. Exhibits diverse biological activities, such as hemorrhage, hemolysis, edema, apoptosis of vascular endothelial cells or tumor cell lines, antibacterial and antiparasitic activities, as well as regulation of platelet aggregation. Effects of snake L-amino oxidases on platelets are controversial, since they either induce aggregation or inhibit agonist-induced aggregation. These different effects are probably due to different experimental conditions. This is L-amino-acid oxidase from Vipera ammodytes ammodytes (Western sand viper).